The sequence spans 920 residues: DNA ligase (920 aa).

NAD(+)-binding positions include 90–94, 139–140, and E173; these read DAAYD and SL. Residue K175 is the N6-AMP-lysine intermediate of the active site. Residues R196, E235, K360, and K384 each coordinate NAD(+). 4 residues coordinate Zn(2+): C481, C484, C500, and C506. A disordered region spans residues 659 to 691; that stretch reads RAQGEAAIESAETQGDTASETTGAPTGAEAPLG. The segment covering 669-682 has biased composition (polar residues); it reads AETQGDTASETTGA. The BRCT domain occupies 839–920; sequence SLPQTLAGKT…FAQLLATGTI (82 aa).

Belongs to the NAD-dependent DNA ligase family. LigA subfamily. Requires Mg(2+) as cofactor. The cofactor is Mn(2+).

The catalysed reaction is NAD(+) + (deoxyribonucleotide)n-3'-hydroxyl + 5'-phospho-(deoxyribonucleotide)m = (deoxyribonucleotide)n+m + AMP + beta-nicotinamide D-nucleotide.. Functionally, DNA ligase that catalyzes the formation of phosphodiester linkages between 5'-phosphoryl and 3'-hydroxyl groups in double-stranded DNA using NAD as a coenzyme and as the energy source for the reaction. It is essential for DNA replication and repair of damaged DNA. This chain is DNA ligase, found in Bifidobacterium longum (strain NCC 2705).